A 332-amino-acid chain; its full sequence is Nucleoid-associated protein VVA0877 (332 aa).

Belongs to the YejK family.

It localises to the cytoplasm. The protein resides in the nucleoid. The protein is Nucleoid-associated protein VVA0877 of Vibrio vulnificus (strain YJ016).